Reading from the N-terminus, the 363-residue chain is NAD(P)H-quinone oxidoreductase subunit 1, chloroplastic (363 aa).

A run of 8 helical transmembrane segments spans residues 26 to 46, 96 to 116, 127 to 147, 175 to 195, 203 to 223, 253 to 273, 303 to 323, and 343 to 363; these read FVWICVPIVVLILGITLGVLV, WLFALGPAIVVIPVLLSFLVI, ISIGMFFWIAVSSVAPVGLLV, LALCVLSVVLMSNSLSTIEIV, ILGWNIWRQPVGFIAFVISAL, FGLFYVASYLNLFASSLFVTI, GLIAFAITLSKAYLFLFASIL, and FLLPVALGNLLLTASFELALL.

This sequence belongs to the complex I subunit 1 family. NDH is composed of at least 16 different subunits, 5 of which are encoded in the nucleus.

The protein localises to the plastid. It localises to the chloroplast thylakoid membrane. It carries out the reaction a plastoquinone + NADH + (n+1) H(+)(in) = a plastoquinol + NAD(+) + n H(+)(out). It catalyses the reaction a plastoquinone + NADPH + (n+1) H(+)(in) = a plastoquinol + NADP(+) + n H(+)(out). Its function is as follows. NDH shuttles electrons from NAD(P)H:plastoquinone, via FMN and iron-sulfur (Fe-S) centers, to quinones in the photosynthetic chain and possibly in a chloroplast respiratory chain. The immediate electron acceptor for the enzyme in this species is believed to be plastoquinone. Couples the redox reaction to proton translocation, and thus conserves the redox energy in a proton gradient. The chain is NAD(P)H-quinone oxidoreductase subunit 1, chloroplastic from Zygnema circumcarinatum (Green alga).